A 134-amino-acid chain; its full sequence is Arsenate reductase (134 aa).

Residues Cys-11, Cys-83, and Cys-90 each act as nucleophile in the active site. 2 cysteine pairs are disulfide-bonded: Cys-11-Cys-83 and Cys-83-Cys-90.

Belongs to the low molecular weight phosphotyrosine protein phosphatase family. Thioredoxin-coupled ArsC subfamily.

It is found in the cytoplasm. It carries out the reaction arsenate + [thioredoxin]-dithiol + H(+) = arsenite + [thioredoxin]-disulfide + H2O. Catalyzes the reduction of arsenate [As(V)] to arsenite [As(III)]. The chain is Arsenate reductase from Bacillus cereus (strain ZK / E33L).